We begin with the raw amino-acid sequence, 154 residues long: Ribonuclease H (154 aa).

The 142-residue stretch at 3-144 (ELPVVTIYTD…ADQLARDGIV (142 aa)) folds into the RNase H type-1 domain. Asp12, Glu50, Asp72, and Asp136 together coordinate Mg(2+).

The protein belongs to the RNase H family. Monomer. Mg(2+) is required as a cofactor.

It is found in the cytoplasm. The catalysed reaction is Endonucleolytic cleavage to 5'-phosphomonoester.. Its function is as follows. Endonuclease that specifically degrades the RNA of RNA-DNA hybrids. This Bradyrhizobium diazoefficiens (strain JCM 10833 / BCRC 13528 / IAM 13628 / NBRC 14792 / USDA 110) protein is Ribonuclease H.